A 259-amino-acid polypeptide reads, in one-letter code: Short-chain dehydrogenase chry4 (259 aa).

Positions 37, 55, 81, 154, 158, 185, and 187 each coordinate NADP(+). The active-site Proton donor is tyrosine 154. Catalysis depends on lysine 158, which acts as the Lowers pKa of active site Tyr.

Belongs to the short-chain dehydrogenases/reductases (SDR) family.

It functions in the pathway pigment biosynthesis. Functionally, short-chain dehydrogenase; part of the gene cluster that mediates the biosynthesis of the yellow pigment chrysogine. Pyruvic acid and anthranilic acid are likely substrates for the nonribosomal peptide synthetase chry1/NRPS14, with pyruvic acid adenylated by the first A domain and anthranilic acid by the second. If pyruvic acid and anthranilic acid are merged and released from chry1/NRPS14 by hydrolysis, a subsequent amidation would lead to 2-pyruvoylaminobenzamide. This process is probably catalyzed by the amidotransferase chry2 using glutamine as amino donor. The dehydrogenase chry5 that has a terminal berberine bridge domain for C-N cyclization could catalyze the cyclization of 2-pyruvoylaminobenzamide to yield acetyl-4(3H)-quinazolidinone. A final reduction of acetyl-4(3H)-quinazolidinone catalyzed by the oxidoreductase chry4 would result in chrysogine. In Gibberella zeae (strain ATCC MYA-4620 / CBS 123657 / FGSC 9075 / NRRL 31084 / PH-1) (Wheat head blight fungus), this protein is Short-chain dehydrogenase chry4.